A 344-amino-acid polypeptide reads, in one-letter code: Outer membrane protein A (344 aa).

Residues 1-14 are Periplasmic-facing; sequence MKAIFVLNAAPKDN. A beta stranded transmembrane segment spans residues 15-24; that stretch reads TWYAGGKLGW. Over 25–49 the chain is Extracellular; the sequence is SQYHDTGFYGNGFQNNNGPTRNDQL. The beta stranded transmembrane segment at 50–59 threads the bilayer; sequence GAGAFGGYQV. The Periplasmic portion of the chain corresponds to 60–62; sequence NPY. A beta stranded membrane pass occupies residues 63–71; it reads LGFEMGYDW. The Extracellular segment spans residues 72–89; sequence LGRMAYKGSVDNGAFKAQ. The beta stranded transmembrane segment at 90–100 threads the bilayer; that stretch reads GVQLTAKLGYP. The Periplasmic portion of the chain corresponds to 101–104; the sequence is ITDD. A beta stranded membrane pass occupies residues 105-114; the sequence is LDIYTRLGGM. Residues 115-139 lie on the Extracellular side of the membrane; that stretch reads VWRADSKGNYASTGVSRSEHDTGVS. The beta stranded transmembrane segment at 140 to 149 threads the bilayer; that stretch reads PVFAGGVEWA. Over 150-153 the chain is Periplasmic; it reads VTRD. The chain crosses the membrane as a beta stranded span at residues 154–162; the sequence is IATRLEYQW. At 163–179 the chain is on the extracellular side; that stretch reads VNNIGDAGTVGTRPDNG. A beta stranded membrane pass occupies residues 180–188; sequence MLSLGVSYR. Residues 189 to 344 are Periplasmic-facing; it reads FGQEDAAPVV…YKEVVTQPQA (156 aa). 4 repeat units span residues 199–200, 201–202, 203–204, and 205–206. Positions 199-206 are 4 X 2 AA tandem repeats of A-P; it reads APAPAPAP. The OmpA-like domain occupies 208-336; the sequence is VATKHFTLKS…RVEIEVKGYK (129 aa). An intrachain disulfide couples Cys309 to Cys321.

The protein belongs to the outer membrane OOP (TC 1.B.6) superfamily. OmpA family. Monomer and homodimer.

The protein localises to the cell outer membrane. Functionally, with TolR probably plays a role in maintaining the position of the peptidoglycan cell wall in the periplasm. Acts as a porin with low permeability that allows slow penetration of small solutes; an internal gate slows down solute passage. Its function is as follows. Required for conjugation with F-type plasmids; probably serves as the mating receptor on recipient cells. This Klebsiella pneumoniae protein is Outer membrane protein A.